The following is a 285-amino-acid chain: 2-dehydro-3-deoxyphosphooctonate aldolase (285 aa).

This sequence belongs to the KdsA family.

The protein localises to the cytoplasm. The enzyme catalyses D-arabinose 5-phosphate + phosphoenolpyruvate + H2O = 3-deoxy-alpha-D-manno-2-octulosonate-8-phosphate + phosphate. It functions in the pathway carbohydrate biosynthesis; 3-deoxy-D-manno-octulosonate biosynthesis; 3-deoxy-D-manno-octulosonate from D-ribulose 5-phosphate: step 2/3. The protein operates within bacterial outer membrane biogenesis; lipopolysaccharide biosynthesis. In Variovorax paradoxus (strain S110), this protein is 2-dehydro-3-deoxyphosphooctonate aldolase.